Consider the following 257-residue polypeptide: Ribosomal RNA small subunit methyltransferase A (257 aa).

The S-adenosyl-L-methionine site is built by Asn-12, Leu-14, Gly-39, Glu-60, Asp-85, and Asn-105.

It belongs to the class I-like SAM-binding methyltransferase superfamily. rRNA adenine N(6)-methyltransferase family. RsmA subfamily.

The protein localises to the cytoplasm. It catalyses the reaction adenosine(1518)/adenosine(1519) in 16S rRNA + 4 S-adenosyl-L-methionine = N(6)-dimethyladenosine(1518)/N(6)-dimethyladenosine(1519) in 16S rRNA + 4 S-adenosyl-L-homocysteine + 4 H(+). In terms of biological role, specifically dimethylates two adjacent adenosines (A1518 and A1519) in the loop of a conserved hairpin near the 3'-end of 16S rRNA in the 30S particle. May play a critical role in biogenesis of 30S subunits. This chain is Ribosomal RNA small subunit methyltransferase A, found in Methylococcus capsulatus (strain ATCC 33009 / NCIMB 11132 / Bath).